Consider the following 390-residue polypeptide: tRNA (guanine(9)-N1)-methyltransferase (390 aa).

The disordered stretch occupies residues 1–72 (MDIDEESYLN…RTAQLAEGYA (72 aa)). Residues 43–59 (ARLEEIKPLKRAAERER) show a composition bias toward basic and acidic residues. In terms of domain architecture, SAM-dependent MTase TRM10-type spans 92–340 (KERKEAQRRI…AVIPIRKYAP (249 aa)). S-adenosyl-L-methionine is bound by residues 246–247 (LS), Gly266, 270–274 (DRNRH), Cys278, Leu292, and 305–307 (KVL). Catalysis depends on Asp270, which acts as the Proton acceptor. Residues 343 to 390 (KTKRAKTETKRNEKEEEEVECTSAEGEEDIGVIEESAEVDPEDVFSNQ) are disordered. The segment covering 347 to 356 (AKTETKRNEK) has biased composition (basic and acidic residues). Positions 357–390 (EEEEVECTSAEGEEDIGVIEESAEVDPEDVFSNQ) are enriched in acidic residues.

This sequence belongs to the class IV-like SAM-binding methyltransferase superfamily. TRM10 family. Monomer.

It localises to the cytoplasm. The protein localises to the nucleus. The catalysed reaction is guanosine(9) in tRNA + S-adenosyl-L-methionine = N(1)-methylguanosine(9) in tRNA + S-adenosyl-L-homocysteine + H(+). In terms of biological role, S-adenosyl-L-methionine-dependent guanine N(1)-methyltransferase that catalyzes the formation of N(1)-methylguanine at position 9 (m1G9) in cytoplasmic tRNA. The protein is tRNA (guanine(9)-N1)-methyltransferase of Cryptococcus neoformans var. neoformans serotype D (strain JEC21 / ATCC MYA-565) (Filobasidiella neoformans).